The following is a 218-amino-acid chain: MAQKINPLGFRLGVTQNDRSHWFAQQRNYSKDLREDQKIRTCIENYVRTHIKSSSNYGGIARVEISRKIDLIQVKIYIGFPNLLLIEGRGFQGIEKLKNDVLNMLDSVDRKLHIAIEKVAKPYRKPNILAEYIALQLEKRVPFRKTMKKAIELAEREEVEGIQIQIAGRLDGKEIARVEWDRGGRVPLQTIRARIDYCYYPVQTIYGVLGIKIWILEE.

One can recognise a KH type-2 domain in the interval 47-120 (VRTHIKSSSN…KLHIAIEKVA (74 aa)).

Belongs to the universal ribosomal protein uS3 family. In terms of assembly, part of the 30S ribosomal subunit.

Its subcellular location is the plastid. The protein resides in the chloroplast. This Picea abies (Norway spruce) protein is Small ribosomal subunit protein uS3c (rps3).